Consider the following 178-residue polypeptide: Oligoribonuclease (178 aa).

The Exonuclease domain occupies 7–168; the sequence is LIWIDLEMTG…DDIRESIAEL (162 aa). Tyr-128 is a catalytic residue.

The protein belongs to the oligoribonuclease family.

It localises to the cytoplasm. Its function is as follows. 3'-to-5' exoribonuclease specific for small oligoribonucleotides. In Pseudomonas syringae pv. tomato (strain ATCC BAA-871 / DC3000), this protein is Oligoribonuclease.